The sequence spans 398 residues: MATTLATDVRLSIAHQTRFAFRLASAISSNPESTVNNAAFSPVSLHVALSLITAGAGGATRNQLAATLGEGEVEGLHALAEQVVQFVLADASNIGGPRVAFANGVFVDASLQLKPSFQELAVCKYKAEAQSVDFQTKAAEVTAQVNSWVEKVTTGLIKDILPAGSIDNTTRLVLGNALYFKGAWTDQFDPRATQSDDFYLLDGSSIQTPFMYSSEEQYISSSDGLKVLKLPYKQGGDKRQFSMYILLPEALSGLWSLAEKLSAEPEFLEQHIPRQKVALRQFKLPKFKISLGIEASDLLKGLGLLLPFGAEADLSEMVDSPMAQNLYISSIFHKAFVEVNETGTEAAATTIAKVVLRQAPPPSVLDFIVDHPFLFLIREDTSGVVLFIGHVVNPLLSS.

Residues G343–F367 are RCL.

The protein belongs to the serpin family.

Functionally, inhibits chymotrypsin, cathepsin G and trypsin in vitro. The protein is Serpin-Z2B of Triticum aestivum (Wheat).